A 458-amino-acid chain; its full sequence is N-acetylgalactosamine kinase (458 aa).

Alpha-D-galactose-binding residues include R43, E49, H50, and D52. Residues G143, S145, and S146 each coordinate ATP. D190 contributes to the alpha-D-galactose binding site. D190 functions as the Proton acceptor in the catalytic mechanism. N233 and K234 together coordinate ATP.

It belongs to the GHMP kinase family. GalK subfamily. In terms of assembly, monomer.

The catalysed reaction is N-acetyl-alpha-D-galactosamine + ATP = N-acetyl-alpha-D-galactosamine 1-phosphate + ADP + H(+). Its function is as follows. Acts on GalNAc. Also acts as a galactokinase when galactose is present at high concentrations. May be involved in a salvage pathway for the reutilization of free GalNAc derived from the degradation of complex carbohydrates. The protein is N-acetylgalactosamine kinase (GALK2) of Homo sapiens (Human).